The following is a 628-amino-acid chain: Chaperone protein HtpG (628 aa).

The tract at residues Met-1–Arg-337 is a; substrate-binding. The tract at residues Glu-338–Lys-554 is b. The segment at Met-555–Arg-628 is c.

It belongs to the heat shock protein 90 family. In terms of assembly, homodimer.

The protein resides in the cytoplasm. Its function is as follows. Molecular chaperone. Has ATPase activity. This is Chaperone protein HtpG from Francisella tularensis subsp. holarctica (strain FTNF002-00 / FTA).